Here is a 467-residue protein sequence, read N- to C-terminus: Glycogen synthase (467 aa).

Lys15 is a binding site for ADP-alpha-D-glucose.

Belongs to the glycosyltransferase 1 family. Bacterial/plant glycogen synthase subfamily.

It carries out the reaction [(1-&gt;4)-alpha-D-glucosyl](n) + ADP-alpha-D-glucose = [(1-&gt;4)-alpha-D-glucosyl](n+1) + ADP + H(+). It functions in the pathway glycan biosynthesis; glycogen biosynthesis. Synthesizes alpha-1,4-glucan chains using ADP-glucose. The sequence is that of Glycogen synthase from Desulfitobacterium hafniense (strain DSM 10664 / DCB-2).